Consider the following 739-residue polypeptide: Ent-kaurene synthase-like 3 (739 aa).

Residues Asp475, Asp479, Asn619, Thr623, and Glu627 each contribute to the Mg(2+) site. Residues Asp475 to Asp479 carry the DDXXD motif motif.

This sequence belongs to the terpene synthase family. Mg(2+) is required as a cofactor. Expressed in roots and stems.

This is Ent-kaurene synthase-like 3 (KSL3) from Oryza sativa subsp. japonica (Rice).